We begin with the raw amino-acid sequence, 463 residues long: Perilipin-5 (463 aa).

The interval 1-108 (MSEEEAAQIP…KLEEKLPFLQ (108 aa)) is interaction with LIPE. The tract at residues 1 to 173 (MSEEEAAQIP…HFLPMTEEEL (173 aa)) is essential for lipid droplet targeting. Residues S2, S148, and S322 each carry the phosphoserine modification. The interval 185–463 (VGSVEDQRRQ…KHTLMPELDF (279 aa)) is interaction with PNPLA2 and ABHD5. A recruits mitochondria at the lipid droplet surface region spans residues 444–463 (QEPETPSCPVKHTLMPELDF).

The protein belongs to the perilipin family. In terms of assembly, homooligomer. Interacts with PNPLA2; prevents interaction of PNPLA2 with ABHD5. Interacts with ABHD5; targets ABHD5 to lipid droplets and promotes interaction of ABHD5 with PNPLA2. Interacts with LIPE. Post-translationally, phosphorylated by PKA. Phosphorylated on serine in skeletal muscle at rest or upon lipolytic stimulation. As to expression, expressed in skeletal muscle, liver, heart and kidney.

It is found in the lipid droplet. The protein resides in the cytoplasm. Its subcellular location is the mitochondrion. Lipid droplet-associated protein that maintains the balance between lipogenesis and lipolysis and also regulates fatty acid oxidation in oxidative tissues. Recruits mitochondria to the surface of lipid droplets and is involved in lipid droplet homeostasis by regulating both the storage of fatty acids in the form of triglycerides and the release of fatty acids for mitochondrial fatty acid oxidation. In lipid droplet triacylglycerol hydrolysis, plays a role as a scaffolding protein for three major key lipolytic players: ABHD5, PNPLA2 and LIPE. Reduces the triacylglycerol hydrolase activity of PNPLA2 by recruiting and sequestering PNPLA2 to lipid droplets. Phosphorylation by PKA enables lipolysis probably by promoting release of ABHD5 from the perilipin scaffold and by facilitating interaction of ABHD5 with PNPLA2. Also increases lipolysis through interaction with LIPE and upon PKA-mediated phosphorylation of LIPE. The polypeptide is Perilipin-5 (PLIN5) (Homo sapiens (Human)).